The chain runs to 452 residues: tRNA-2-methylthio-N(6)-dimethylallyladenosine synthase (452 aa).

The region spanning 5–121 (RRYHITTFGC…LADLLAQVEA (117 aa)) is the MTTase N-terminal domain. Positions 14, 50, 84, 156, 160, and 163 each coordinate [4Fe-4S] cluster. Residues 142-379 (RDSTITAWVN…NHLVAQMAAD (238 aa)) form the Radical SAM core domain. The TRAM domain occupies 382 to 446 (QRYLGRTEEV…AFSLTGQILS (65 aa)).

Belongs to the methylthiotransferase family. MiaB subfamily. In terms of assembly, monomer. Requires [4Fe-4S] cluster as cofactor.

The protein resides in the cytoplasm. The catalysed reaction is N(6)-dimethylallyladenosine(37) in tRNA + (sulfur carrier)-SH + AH2 + 2 S-adenosyl-L-methionine = 2-methylsulfanyl-N(6)-dimethylallyladenosine(37) in tRNA + (sulfur carrier)-H + 5'-deoxyadenosine + L-methionine + A + S-adenosyl-L-homocysteine + 2 H(+). Catalyzes the methylthiolation of N6-(dimethylallyl)adenosine (i(6)A), leading to the formation of 2-methylthio-N6-(dimethylallyl)adenosine (ms(2)i(6)A) at position 37 in tRNAs that read codons beginning with uridine. This Synechococcus elongatus (strain ATCC 33912 / PCC 7942 / FACHB-805) (Anacystis nidulans R2) protein is tRNA-2-methylthio-N(6)-dimethylallyladenosine synthase.